Here is a 197-residue protein sequence, read N- to C-terminus: Putative methyltransferase Mtx subunit A (197 aa).

This sequence belongs to the MtrA family. As to quaternary structure, may be part of a complex composed of 3 subunits; MtxA, MtxH and MtxX.

In Methanosarcina acetivorans (strain ATCC 35395 / DSM 2834 / JCM 12185 / C2A), this protein is Putative methyltransferase Mtx subunit A (mtxA).